The following is a 367-amino-acid chain: Quinolinate synthase (367 aa).

Residues H45 and S62 each coordinate iminosuccinate. Residue C109 coordinates [4Fe-4S] cluster. Residues 140–142 (YVN) and S161 contribute to the iminosuccinate site. C229 contacts [4Fe-4S] cluster. Iminosuccinate is bound by residues 255–257 (HPE) and T272. C319 provides a ligand contact to [4Fe-4S] cluster.

Belongs to the quinolinate synthase family. Type 3 subfamily. [4Fe-4S] cluster is required as a cofactor.

The protein localises to the cytoplasm. The enzyme catalyses iminosuccinate + dihydroxyacetone phosphate = quinolinate + phosphate + 2 H2O + H(+). Its pathway is cofactor biosynthesis; NAD(+) biosynthesis; quinolinate from iminoaspartate: step 1/1. In terms of biological role, catalyzes the condensation of iminoaspartate with dihydroxyacetone phosphate to form quinolinate. This chain is Quinolinate synthase, found in Anoxybacillus flavithermus (strain DSM 21510 / WK1).